Consider the following 466-residue polypeptide: Glutamate--tRNA ligase (466 aa).

Residues 9–19 (PSPTGDLHVGS) carry the 'HIGH' region motif. The 'KMSKS' region signature appears at 237–241 (KLSKR). ATP is bound at residue lysine 240.

Belongs to the class-I aminoacyl-tRNA synthetase family. Glutamate--tRNA ligase type 1 subfamily. As to quaternary structure, monomer.

It is found in the cytoplasm. The enzyme catalyses tRNA(Glu) + L-glutamate + ATP = L-glutamyl-tRNA(Glu) + AMP + diphosphate. In terms of biological role, catalyzes the attachment of glutamate to tRNA(Glu) in a two-step reaction: glutamate is first activated by ATP to form Glu-AMP and then transferred to the acceptor end of tRNA(Glu). The protein is Glutamate--tRNA ligase of Baumannia cicadellinicola subsp. Homalodisca coagulata.